A 1978-amino-acid polypeptide reads, in one-letter code: Protein MOR1 (1978 aa).

HEAT repeat units lie at residues 48 to 86 and 165 to 202; these read DPRL…AADS and IPPK…WIGK. A disordered region spans residues 230–264; sequence AGAKPTRKIRSEQDKEPEAEASSDVVGDGPSEEAV. Over residues 238-247 the composition is skewed to basic and acidic residues; sequence IRSEQDKEPE. HEAT repeat units follow at residues 322–359, 363–400, and 442–479; these read GDFS…GLRT, ASSR…AGCL, and KAHK…SVGM. Residues 501-587 are disordered; the sequence is IAGSGGGDQA…SVEPPEDVEP (87 aa). The segment covering 510-527 has biased composition (low complexity); the sequence is AGTSSVTVQSSVGSTATG. Positions 565-577 are enriched in basic and acidic residues; the sequence is GKKDGSVRNEGSK. 4 HEAT repeats span residues 849–886, 890–928, 932–969, and 1008–1045; these read DIST…EANK, PTGT…AMGP, KASK…AVHL, and VDAI…VSGQ. The disordered stretch occupies residues 1087–1115; the sequence is SKGVTKISKSTSNGTLKQGNRSRAVPTKG. The segment covering 1093-1107 has biased composition (polar residues); sequence ISKSTSNGTLKQGNR. HEAT repeat units follow at residues 1230 to 1253, 1254 to 1286, 1287 to 1325, and 1328 to 1365; these read LKVL…MTEA, EAAI…QIIQ, AYSV…TCGT, and GGLL…ILGA. Residues 1393–1403 show a composition bias toward basic and acidic residues; the sequence is MEKRREGKPGE. The segment at 1393 to 1431 is disordered; it reads MEKRREGKPGEARAALRRSVRDSGPEVAEQSGDISQTVP. Residues 1535–1575 form an HEAT 14 repeat; that stretch reads RSCKYVLNTLMQTFQNKKLAHAVKEGTLESLITELLLWLLD. A disordered region spans residues 1837 to 1862; it reads AAAGRTPSSLPLSTPPPSSLALPSPD.

This sequence belongs to the TOG/XMAP215 family. Expressed in roots, cotyledons, rosette leaves, stems, open flowers and green siliques.

The protein resides in the cytoplasm. Its subcellular location is the cytoskeleton. The protein localises to the phragmoplast. It localises to the spindle. Functionally, microtubule-binding protein that is essential for cortical microtubules organization and function. Essential for maintaining the interphase cortical array and for correct morphogenesis. Promotes rapid growth and shrinkage of microtubules and suppresses the pausing of interphase microtubules. Regulates the structure and function of microtubule arrays during mitosis and cytokinesis. Probably not required for cellulose microfibrils alignment in roots. This chain is Protein MOR1 (MOR1), found in Arabidopsis thaliana (Mouse-ear cress).